The sequence spans 454 residues: Allantoinase (454 aa).

Zn(2+)-binding residues include H60, H62, K147, H183, H239, and D312. K147 is subject to N6-carboxylysine.

Belongs to the metallo-dependent hydrolases superfamily. Allantoinase family. In terms of assembly, homotetramer. Zn(2+) serves as cofactor. Post-translationally, carboxylation allows a single lysine to coordinate two zinc ions.

The catalysed reaction is (S)-allantoin + H2O = allantoate + H(+). It functions in the pathway nitrogen metabolism; (S)-allantoin degradation; allantoate from (S)-allantoin: step 1/1. Catalyzes the conversion of allantoin (5-ureidohydantoin) to allantoic acid by hydrolytic cleavage of the five-member hydantoin ring. This is Allantoinase from Bacillus velezensis (strain DSM 23117 / BGSC 10A6 / LMG 26770 / FZB42) (Bacillus amyloliquefaciens subsp. plantarum).